We begin with the raw amino-acid sequence, 342 residues long: ATP-dependent (S)-NAD(P)H-hydrate dehydratase (342 aa).

Positions 11 to 337 (ILPALEKVVP…EYLGHRLFTF (327 aa)) constitute a YjeF C-terminal domain. (6S)-NADPHX-binding positions include G127 and 180–186 (NVMEHKR). ATP-binding positions include 229 to 233 (KGKTD) and 248 to 257 (GSPRRCGGQG). D258 is a binding site for (6S)-NADPHX.

The protein belongs to the NnrD/CARKD family. The cofactor is Mg(2+).

It catalyses the reaction (6S)-NADHX + ATP = ADP + phosphate + NADH + H(+). It carries out the reaction (6S)-NADPHX + ATP = ADP + phosphate + NADPH + H(+). Catalyzes the dehydration of the S-form of NAD(P)HX at the expense of ATP, which is converted to ADP. Together with NAD(P)HX epimerase, which catalyzes the epimerization of the S- and R-forms, the enzyme allows the repair of both epimers of NAD(P)HX, a damaged form of NAD(P)H that is a result of enzymatic or heat-dependent hydration. The chain is ATP-dependent (S)-NAD(P)H-hydrate dehydratase from Physcomitrium patens (Spreading-leaved earth moss).